The sequence spans 103 residues: Large ribosomal subunit protein uL24 (103 aa).

Belongs to the universal ribosomal protein uL24 family. In terms of assembly, part of the 50S ribosomal subunit.

In terms of biological role, one of two assembly initiator proteins, it binds directly to the 5'-end of the 23S rRNA, where it nucleates assembly of the 50S subunit. Its function is as follows. One of the proteins that surrounds the polypeptide exit tunnel on the outside of the subunit. The chain is Large ribosomal subunit protein uL24 from Bacillus mycoides (strain KBAB4) (Bacillus weihenstephanensis).